The chain runs to 260 residues: MSGRLIGKVALVSGGARGMGASHVRAMVAEGAKVVFGDILDEEGKAVAAELADAARYVHLDVTQPAQWTAAVDTAVTAFGGLHVLVNNAGILNIGTIEDYALTEWQRILDVNLTGVFLGIRAVVKPMKEAGRGSIINISSIEGLAGTVACHGYTATKFAVRGLTKSTALELGPSGIRVNSIHPGLVKTPMTDWVPEDIFQTALGRAAEPVEVSNLVVYLASDESSYSTGAEFVVDGGTVAGLAHNDFGAVEVSSQPEWVT.

Positions 17, 19, 38, 61, 62, 88, 153, 157, 186, 188, and 191 each coordinate NAD(+). The active-site Proton acceptor is tyrosine 153.

Belongs to the short-chain dehydrogenases/reductases (SDR) family. Homotetramer.

It catalyses the reaction androstan-3alpha,17beta-diol + NAD(+) = 17beta-hydroxyandrostanone + NADH + H(+). Its pathway is lipid metabolism; steroid degradation. In terms of biological role, probably involved in steroid metabolism. This is 3-alpha-(or 20-beta)-hydroxysteroid dehydrogenase (fabG3) from Mycobacterium bovis (strain ATCC BAA-935 / AF2122/97).